The chain runs to 308 residues: D-alanine--D-alanine ligase (308 aa).

Residues 100–295 (KEVFVRNGLP…FDGLIGRLIE (196 aa)) form the ATP-grasp domain. 127 to 180 (PFAFPAFIKSNNGGSSLALHRVSCPGELARALDELFTRGGEAIIEPAVEGVEVT) is an ATP binding site. Mg(2+)-binding residues include aspartate 249, glutamate 262, and asparagine 264.

Belongs to the D-alanine--D-alanine ligase family. Requires Mg(2+) as cofactor. It depends on Mn(2+) as a cofactor.

It is found in the cytoplasm. The catalysed reaction is 2 D-alanine + ATP = D-alanyl-D-alanine + ADP + phosphate + H(+). It functions in the pathway cell wall biogenesis; peptidoglycan biosynthesis. Functionally, cell wall formation. The protein is D-alanine--D-alanine ligase of Oleidesulfovibrio alaskensis (strain ATCC BAA-1058 / DSM 17464 / G20) (Desulfovibrio alaskensis).